Here is a 47-residue protein sequence, read N- to C-terminus: Small, acid-soluble spore protein N (47 aa).

Composition is skewed to polar residues over residues 1–11 and 29–47; these read MGNPKSNQQPF and KQMQDQSGQHPQVIQTKGE. The disordered stretch occupies residues 1–47; it reads MGNPKSNQQPFVPQHIGTKPREAGGNKGKQMQDQSGQHPQVIQTKGE.

The protein belongs to the SspN family.

The protein resides in the spore core. In Anoxybacillus flavithermus (strain DSM 21510 / WK1), this protein is Small, acid-soluble spore protein N.